The primary structure comprises 293 residues: Protein phosphatase 1 regulatory subunit 3B (293 aa).

In terms of domain architecture, CBM21 spans 129–237 (RQRIENDHVC…NNQGKNYRII (109 aa)).

As to quaternary structure, interacts with glycogen, PPP1CC catalytic subunit of PP1 and PYGL. Associates with glycogen particles. Forms complexes with debranching enzyme, glycogen phosphorylase, glycogen synthase and phosphorylase kinase which is necessary for its regulation of PP1 activity.

In terms of biological role, acts as a glycogen-targeting subunit for phosphatase PP1. Facilitates interaction of the PP1 with enzymes of the glycogen metabolism and regulates its activity. Suppresses the rate at which PP1 dephosphorylates (inactivates) glycogen phosphorylase and enhances the rate at which it activates glycogen synthase and therefore limits glycogen breakdown. The chain is Protein phosphatase 1 regulatory subunit 3B (ppp1r3b) from Danio rerio (Zebrafish).